The following is a 317-amino-acid chain: Transcriptional activator protein med (317 aa).

The first 17 residues, 1 to 17, serve as a signal peptide directing secretion; the sequence is MITRLVMIFSVLLLLSG. The N-palmitoyl cysteine moiety is linked to residue Cys-18. Cys-18 carries the S-diacylglycerol cysteine lipid modification.

This sequence belongs to the BMP lipoprotein family.

Its subcellular location is the cell membrane. Functionally, positive activator of the comK gene. The protein is Transcriptional activator protein med (med) of Bacillus subtilis (strain 168).